The chain runs to 126 residues: MEIGVDIVELERIRNAWNRYGLAFLNRFLTAGEIVYCLEKKDPAASIAGRFAAKEALVKAMGTGISGKVRWQSFEILNDAKGKPVVHITGTDLSSLVRSARVSISHDRHSAIAMAIISLEPVAGSR.

Residues aspartate 6 and glutamate 55 each coordinate Mg(2+).

This sequence belongs to the P-Pant transferase superfamily. AcpS family. Mg(2+) is required as a cofactor.

The protein resides in the cytoplasm. It catalyses the reaction apo-[ACP] + CoA = holo-[ACP] + adenosine 3',5'-bisphosphate + H(+). Its function is as follows. Transfers the 4'-phosphopantetheine moiety from coenzyme A to a Ser of acyl-carrier-protein. In Chlorobium limicola (strain DSM 245 / NBRC 103803 / 6330), this protein is Holo-[acyl-carrier-protein] synthase.